Here is a 321-residue protein sequence, read N- to C-terminus: Glucokinase (321 aa).

Position 8–13 (8–13) interacts with ATP; the sequence is GDVGGT.

This sequence belongs to the bacterial glucokinase family.

The protein localises to the cytoplasm. It carries out the reaction D-glucose + ATP = D-glucose 6-phosphate + ADP + H(+). In Shigella sonnei (strain Ss046), this protein is Glucokinase.